Reading from the N-terminus, the 352-residue chain is Chorismate synthase (352 aa).

Arginine 48 is an NADP(+) binding site. FMN is bound by residues 125–127 (RSS), 238–239 (NA), glycine 278, 293–297 (KPTSS), and arginine 319.

The protein belongs to the chorismate synthase family. Homotetramer. FMNH2 serves as cofactor.

The enzyme catalyses 5-O-(1-carboxyvinyl)-3-phosphoshikimate = chorismate + phosphate. The protein operates within metabolic intermediate biosynthesis; chorismate biosynthesis; chorismate from D-erythrose 4-phosphate and phosphoenolpyruvate: step 7/7. Catalyzes the anti-1,4-elimination of the C-3 phosphate and the C-6 proR hydrogen from 5-enolpyruvylshikimate-3-phosphate (EPSP) to yield chorismate, which is the branch point compound that serves as the starting substrate for the three terminal pathways of aromatic amino acid biosynthesis. This reaction introduces a second double bond into the aromatic ring system. The sequence is that of Chorismate synthase from Legionella pneumophila (strain Lens).